A 489-amino-acid polypeptide reads, in one-letter code: Protein-export membrane protein SecD (489 aa).

The next 6 membrane-spanning stretches (helical) occupy residues Val-17–Ala-37, Phe-328–Val-348, Ser-356–Ala-376, Leu-384–Ile-404, Leu-428–Met-448, and Leu-450–Phe-470.

Belongs to the SecD/SecF family. SecD subfamily. In terms of assembly, part of the protein translocation apparatus. Forms a complex with SecF.

The protein localises to the cell membrane. Functionally, involved in protein export. This is Protein-export membrane protein SecD from Methanolacinia petrolearia (strain DSM 11571 / OCM 486 / SEBR 4847) (Methanoplanus petrolearius).